An 83-amino-acid chain; its full sequence is Hainantoxin-III 5 (83 aa).

An N-terminal signal peptide occupies residues 1–21; it reads MKASRFLALAGLVLLFVVGYA. Positions 22–48 are excised as a propeptide; sequence SESEEKEFPRELLSKIFAVDDFKGEER. 3 cysteine pairs are disulfide-bonded: cysteine 50/cysteine 65, cysteine 57/cysteine 70, and cysteine 64/cysteine 77. Leucine 81 carries the leucine amide modification.

The protein belongs to the neurotoxin 10 (Hwtx-1) family. 15 (Hntx-3) subfamily. As to quaternary structure, monomer. As to expression, expressed by the venom gland.

It localises to the secreted. In terms of biological role, selective antagonist of neuronal tetrodotoxin (TTX)-sensitive voltage-gated sodium channels (IC(50)=1270 nM on Nav1.1/SCN1A, 270 nM on Nav1.2/SCN2A, 491 nM on Nav1.3/SCN3A and 232 nM on Nav1.7/SCN9A). This toxin suppress Nav1.7 current amplitude without significantly altering the activation, inactivation, and repriming kinetics. Short extreme depolarizations partially activate the toxin-bound channel, indicating voltage-dependent inhibition of this toxin. This toxin increases the deactivation of the Nav1.7 current after extreme depolarizations. The toxin-Nav1.7 complex is gradually dissociated upon prolonged strong depolarizations in a voltage-dependent manner, and the unbound toxin rebinds to Nav1.7 after a long repolarization. Moreover, analysis of chimeric channels showed that the DIIS3-S4 linker is critical for toxin binding to Nav1.7. These data are consistent with this toxin interacting with Nav1.7 site 4 and trapping the domain II voltage sensor in the closed state. The polypeptide is Hainantoxin-III 5 (Cyriopagopus hainanus (Chinese bird spider)).